A 348-amino-acid polypeptide reads, in one-letter code: D-alanine--D-alanine ligase (348 aa).

Residues 136 to 341 (KYLLQTVGIP…YSDLIEELIQ (206 aa)) form the ATP-grasp domain. 169 to 224 (EGSLIYPVFVKPANMGSSVGISKVENREELQEALEEAFRYDARAIVEQGIEAREIE) is a binding site for ATP. The Mg(2+) site is built by Asp295, Glu308, and Asn310.

The protein belongs to the D-alanine--D-alanine ligase family. The cofactor is Mg(2+). Requires Mn(2+) as cofactor.

It is found in the cytoplasm. The enzyme catalyses 2 D-alanine + ATP = D-alanyl-D-alanine + ADP + phosphate + H(+). The protein operates within cell wall biogenesis; peptidoglycan biosynthesis. Cell wall formation. The protein is D-alanine--D-alanine ligase (ddl) of Enterococcus faecalis (strain ATCC 700802 / V583).